A 273-amino-acid polypeptide reads, in one-letter code: MSQLSTIIEQAFEDCANFTAADCPSEIRQAVEEAIAGLDNGTLRVAEKINGEWVVHQWLKKAVLLSFKLNDNKPIESCDLRFYDKVETKFSGWTEEQFKAAGVRVVPPAVARRGSFQAKNVVLMPSYVNIGAYVDEGTMVDTWATVGSCAQIGKNVHLSGGVGIGGVLEPLQANPTIIEDNCFIGARSEIVEGVIVEEGSVISMGVYIGQSTRIYDRETGEIHYGRVPAGSVVVPGNLPSADGKYSLYAAIIVKKVDAQTRAKTSLNDLLRAD.

It belongs to the transferase hexapeptide repeat family.

It is found in the cytoplasm. It catalyses the reaction (S)-2,3,4,5-tetrahydrodipicolinate + succinyl-CoA + H2O = (S)-2-succinylamino-6-oxoheptanedioate + CoA. The protein operates within amino-acid biosynthesis; L-lysine biosynthesis via DAP pathway; LL-2,6-diaminopimelate from (S)-tetrahydrodipicolinate (succinylase route): step 1/3. The chain is 2,3,4,5-tetrahydropyridine-2,6-dicarboxylate N-succinyltransferase from Acinetobacter baumannii (strain SDF).